Reading from the N-terminus, the 321-residue chain is LIMR family protein SELMODRAFT_432210 (321 aa).

The next 5 membrane-spanning stretches (helical) occupy residues 28–48 (KQLW…VIPF), 116–133 (CFSL…LDLW), 139–159 (LCVF…FGGV), 240–260 (LVFG…ILVF), and 284–304 (LLGT…VISG).

This sequence belongs to the LIMR family.

The protein resides in the membrane. This Selaginella moellendorffii (Spikemoss) protein is LIMR family protein SELMODRAFT_432210.